The chain runs to 586 residues: Phosphomethylpyrimidine synthase (586 aa).

The disordered stretch occupies residues 1 to 58 (MKQSVSAEQIELKSSLPGSKKVYVDGPREGMKVPMREIEQSDTNGVPNPPIRVYDTSG). Basic and acidic residues predominate over residues 22-39 (VYVDGPREGMKVPMREIE). Substrate contacts are provided by residues Asn-193, Met-222, Tyr-251, His-287, 307-309 (SRG), 348-351 (DGLR), and Glu-387. Zn(2+) is bound at residue His-391. Substrate is bound at residue Tyr-414. His-455 is a Zn(2+) binding site. Residues Cys-535, Cys-538, and Cys-543 each contribute to the [4Fe-4S] cluster site.

Belongs to the ThiC family. [4Fe-4S] cluster is required as a cofactor.

It catalyses the reaction 5-amino-1-(5-phospho-beta-D-ribosyl)imidazole + S-adenosyl-L-methionine = 4-amino-2-methyl-5-(phosphooxymethyl)pyrimidine + CO + 5'-deoxyadenosine + formate + L-methionine + 3 H(+). It functions in the pathway cofactor biosynthesis; thiamine diphosphate biosynthesis. Functionally, catalyzes the synthesis of the hydroxymethylpyrimidine phosphate (HMP-P) moiety of thiamine from aminoimidazole ribotide (AIR) in a radical S-adenosyl-L-methionine (SAM)-dependent reaction. The polypeptide is Phosphomethylpyrimidine synthase (Bacillus anthracis (strain A0248)).